Consider the following 320-residue polypeptide: Methylenetetrahydrofolate dehydrogenase [NAD(+)] (320 aa).

The active site involves Cys152. Residues 187 to 188 and 210 to 211 each bind NAD(+); these read RS and DI.

It belongs to the tetrahydrofolate dehydrogenase/cyclohydrolase family. As to quaternary structure, homodimer.

The protein resides in the cytoplasm. Its subcellular location is the nucleus. It carries out the reaction (6R)-5,10-methylene-5,6,7,8-tetrahydrofolate + NAD(+) = (6R)-5,10-methenyltetrahydrofolate + NADH. It participates in one-carbon metabolism; tetrahydrofolate interconversion. In terms of biological role, catalyzes oxidation of cytoplasmic one-carbon units for purine biosynthesis. The chain is Methylenetetrahydrofolate dehydrogenase [NAD(+)] (mtd1) from Schizosaccharomyces pombe (strain 972 / ATCC 24843) (Fission yeast).